A 1210-amino-acid chain; its full sequence is uncharacterized protein (1210 aa).

To E.coli molybdate metabolism regulator (MolR).

This is an uncharacterized protein from Escherichia coli (strain K12).